Reading from the N-terminus, the 490-residue chain is MERKNVESLFAHARDINALVIGDLMLDEYLWGRAERISPEAPVQVLDVTREEVRIGGAGNVANNLVALGCRVSVASVVGGDENGTILLHAFSGKGVDVSGVFEDPQRTTSRKTRVVAANQQIVRIDRESRDPIGAGYEEKIVGFLREQGSRFNVILISDYLKGVLTPTLLAAVIAVARERKIPVVVDPKGNDYTKYRGATLLTPNRKEAEAASGIAIRDEASLCRAGERLLATADLTALVITRSEEGMSLFLRDGGVVHIPTFAREVFDVTGAGDTVLAILGLALACGVGFADAAGLANVAAGIAVGKVGTSTVSPAEVIGSMGFQHSDSDAKIKNLDGLAGIIEAEKARGKKIVFTNGCFDLLHVGHVKYLQKAKSYGDVLVLGLNSDASVRRLKGEKRPLIDEAERAHILAALDCIDYVVIFDEDTPLRLIETLKPAVLVKGGDYTPEGVVGKDVVESYGGRVELVTFVDGRSTTNIIDKILRAYGEE.

A ribokinase region spans residues 1–330 (MERKNVESLF…GSMGFQHSDS (330 aa)). Residue 205-208 (NRKE) coordinates ATP. The active site involves Asp-275. The segment at 356 to 490 (FTNGCFDLLH…DKILRAYGEE (135 aa)) is cytidylyltransferase.

The protein in the N-terminal section; belongs to the carbohydrate kinase PfkB family. In the C-terminal section; belongs to the cytidylyltransferase family. In terms of assembly, homodimer.

It carries out the reaction D-glycero-beta-D-manno-heptose 7-phosphate + ATP = D-glycero-beta-D-manno-heptose 1,7-bisphosphate + ADP + H(+). The enzyme catalyses D-glycero-beta-D-manno-heptose 1-phosphate + ATP + H(+) = ADP-D-glycero-beta-D-manno-heptose + diphosphate. It functions in the pathway nucleotide-sugar biosynthesis; ADP-L-glycero-beta-D-manno-heptose biosynthesis; ADP-L-glycero-beta-D-manno-heptose from D-glycero-beta-D-manno-heptose 7-phosphate: step 1/4. Its pathway is nucleotide-sugar biosynthesis; ADP-L-glycero-beta-D-manno-heptose biosynthesis; ADP-L-glycero-beta-D-manno-heptose from D-glycero-beta-D-manno-heptose 7-phosphate: step 3/4. Functionally, catalyzes the phosphorylation of D-glycero-D-manno-heptose 7-phosphate at the C-1 position to selectively form D-glycero-beta-D-manno-heptose-1,7-bisphosphate. In terms of biological role, catalyzes the ADP transfer from ATP to D-glycero-beta-D-manno-heptose 1-phosphate, yielding ADP-D-glycero-beta-D-manno-heptose. This Geobacter metallireducens (strain ATCC 53774 / DSM 7210 / GS-15) protein is Bifunctional protein HldE.